Here is a 489-residue protein sequence, read N- to C-terminus: Metal cation symporter ZIP14 (489 aa).

The N-terminal stretch at M1–A28 is a signal peptide. The Extracellular segment spans residues S29–G155. N-linked (GlcNAc...) asparagine glycosylation is found at N52, N75, N85, and N100. Residues F156 to M176 form a helical membrane-spanning segment. Residues K177–L184 are Cytoplasmic-facing. A helical membrane pass occupies residues L185–I205. Over P206 to S221 the chain is Extracellular. Residues A222–L242 form a helical membrane-spanning segment. Over K243–G349 the chain is Cytoplasmic. Residues H248 to F255 carry the HHHGHXHX-motif motif. A helical membrane pass occupies residues L350–I370. Residues L371–Q394 are Extracellular-facing. An XEXPHE-motif motif is present at residues E373–E378. Residues A395 to L415 traverse the membrane as a helical segment. Topologically, residues A416 to S421 are cytoplasmic. A helical membrane pass occupies residues A422 to F442. The Extracellular segment spans residues P443 to S457. Residues F458–V478 traverse the membrane as a helical segment. Residues L479–G489 are Cytoplasmic-facing.

The protein belongs to the ZIP transporter (TC 2.A.5) family. Homotrimer. In terms of processing, ubiquitinated. Ubiquitination occurs upon iron depletion. The ubiquitinated form undergoes proteasomal degradation. N-glycosylated. N-glycosylation at Asn-100 is required for iron-regulated extraction of the transporter from membranes and subsequent proteasomal degradation. Widely expressed. Highly and transiently expressed during the early stage of adipocyte differentiation. Strongly expressed in liver, preadipocyte, duodenum and jejunum, moderately in brain, heart, skeletal muscle, spleen, pancreas, kidney and white adipose cells. Expression is almost undetectable in lung, testis and brown adipose cells. Expressed by chondrocytes and pituitary cells. As to expression, more strongly expressed in brain. In terms of tissue distribution, more strongly expressed in liver, kidney and duodenum.

It localises to the cell membrane. It is found in the apical cell membrane. Its subcellular location is the basolateral cell membrane. The protein localises to the early endosome membrane. The protein resides in the late endosome membrane. It localises to the lysosome membrane. The enzyme catalyses Zn(2+)(out) + 2 hydrogencarbonate(out) = Zn(2+)(in) + 2 hydrogencarbonate(in). The catalysed reaction is Mn(2+)(out) + 2 hydrogencarbonate(out) = Mn(2+)(in) + 2 hydrogencarbonate(in). It catalyses the reaction Fe(2+)(out) + 2 hydrogencarbonate(out) = Fe(2+)(in) + 2 hydrogencarbonate(in). It carries out the reaction Cd(2+)(out) + 2 hydrogencarbonate(out) = Cd(2+)(in) + 2 hydrogencarbonate(in). Inhibited by cyanide and therefore dependent of an energy source. Inhibited by DIDS/4,4'-diisothiocyanatostilbene-2,2'-disulfonic acid, an inhibitor hydrogencarbonate-dependent transporters. In terms of biological role, electroneutral transporter of the plasma membrane mediating the cellular uptake of the divalent metal cations zinc, manganese and iron that are important for tissue homeostasis, metabolism, development and immunity. Functions as an energy-dependent symporter, transporting through the membranes an electroneutral complex composed of a divalent metal cation and two bicarbonate anions. Beside these endogenous cellular substrates, can also import cadmium a non-essential metal which is cytotoxic and carcinogenic. Controls the cellular uptake by the intestinal epithelium of systemic zinc, which is in turn required to maintain tight junctions and the intestinal permeability. Modifies the activity of zinc-dependent phosphodiesterases, thereby indirectly regulating G protein-coupled receptor signaling pathways important for gluconeogenesis and chondrocyte differentiation. Regulates insulin receptor signaling, glucose uptake, glycogen synthesis and gluconeogenesis in hepatocytes through the zinc-dependent intracellular catabolism of insulin. Through zinc cellular uptake also plays a role in the adaptation of cells to endoplasmic reticulum stress. Major manganese transporter of the basolateral membrane of intestinal epithelial cells, it plays a central role in manganese systemic homeostasis through intestinal manganese uptake. Also involved in manganese extracellular uptake by cells of the blood-brain barrier. May also play a role in manganese and zinc homeostasis participating in their elimination from the blood through the hepatobiliary excretion. Also functions in the extracellular uptake of free iron. May also function intracellularly and mediate the transport from endosomes to cytosol of iron endocytosed by transferrin. Plays a role in innate immunity by regulating the expression of cytokines by activated macrophages. This Mus musculus (Mouse) protein is Metal cation symporter ZIP14.